Here is a 616-residue protein sequence, read N- to C-terminus: Pyrophosphate--fructose 6-phosphate 1-phosphotransferase subunit alpha (616 aa).

This sequence belongs to the phosphofructokinase type A (PFKA) family. PPi-dependent PFK group II subfamily. Clade 'Long' sub-subfamily. In terms of assembly, tetramer of two alpha (regulatory) and two beta (catalytic) chains.

It is found in the cytoplasm. Its pathway is carbohydrate degradation; glycolysis; D-glyceraldehyde 3-phosphate and glycerone phosphate from D-glucose: step 3/4. With respect to regulation, allosterically activated by fructose 2,6-bisphosphate. Functionally, regulatory subunit of pyrophosphate--fructose 6-phosphate 1-phosphotransferase. The protein is Pyrophosphate--fructose 6-phosphate 1-phosphotransferase subunit alpha of Solanum tuberosum (Potato).